The following is a 154-amino-acid chain: Ribonuclease H (154 aa).

The RNase H type-1 domain maps to 1 to 142 (MTKQVEIFTD…CDELAREGAN (142 aa)). Mg(2+) is bound by residues D10, E48, D70, and D134.

Belongs to the RNase H family. In terms of assembly, monomer. The cofactor is Mg(2+).

It localises to the cytoplasm. The catalysed reaction is Endonucleolytic cleavage to 5'-phosphomonoester.. Endonuclease that specifically degrades the RNA of RNA-DNA hybrids. In Yersinia enterocolitica serotype O:8 / biotype 1B (strain NCTC 13174 / 8081), this protein is Ribonuclease H.